Here is a 375-residue protein sequence, read N- to C-terminus: UDP-N-acetylglucosamine--N-acetylmuramyl-(pentapeptide) pyrophosphoryl-undecaprenol N-acetylglucosamine transferase (375 aa).

UDP-N-acetyl-alpha-D-glucosamine-binding positions include Thr-13–Gly-15, Asn-124, Arg-165, Ser-193, and Gln-294.

Belongs to the glycosyltransferase 28 family. MurG subfamily.

It localises to the cell inner membrane. It carries out the reaction di-trans,octa-cis-undecaprenyl diphospho-N-acetyl-alpha-D-muramoyl-L-alanyl-D-glutamyl-meso-2,6-diaminopimeloyl-D-alanyl-D-alanine + UDP-N-acetyl-alpha-D-glucosamine = di-trans,octa-cis-undecaprenyl diphospho-[N-acetyl-alpha-D-glucosaminyl-(1-&gt;4)]-N-acetyl-alpha-D-muramoyl-L-alanyl-D-glutamyl-meso-2,6-diaminopimeloyl-D-alanyl-D-alanine + UDP + H(+). It functions in the pathway cell wall biogenesis; peptidoglycan biosynthesis. Cell wall formation. Catalyzes the transfer of a GlcNAc subunit on undecaprenyl-pyrophosphoryl-MurNAc-pentapeptide (lipid intermediate I) to form undecaprenyl-pyrophosphoryl-MurNAc-(pentapeptide)GlcNAc (lipid intermediate II). This is UDP-N-acetylglucosamine--N-acetylmuramyl-(pentapeptide) pyrophosphoryl-undecaprenol N-acetylglucosamine transferase from Brucella anthropi (strain ATCC 49188 / DSM 6882 / CCUG 24695 / JCM 21032 / LMG 3331 / NBRC 15819 / NCTC 12168 / Alc 37) (Ochrobactrum anthropi).